Here is a 167-residue protein sequence, read N- to C-terminus: Phospholipase A2 heteromtoxin (167 aa).

Positions 38, 40, and 42 each coordinate Ca(2+). 5 disulfide bridges follow: C39/C61, C60/C99, C67/C92, C90/C127, and C132/C144. Residue H64 is part of the active site. D65 is a Ca(2+) binding site. The propeptide occupies 136–140 (GRSAR).

The protein belongs to the phospholipase A2 family. Group III subfamily. As to quaternary structure, heterodimer composed of a large and a small subunits; disulfide-linked. Requires Ca(2+) as cofactor. In terms of tissue distribution, expressed by the venom gland.

The protein localises to the secreted. It carries out the reaction a 1,2-diacyl-sn-glycero-3-phosphocholine + H2O = a 1-acyl-sn-glycero-3-phosphocholine + a fatty acid + H(+). In terms of biological role, phospholipase toxin, which catalyzes the calcium-dependent hydrolysis of the 2-acyl groups in 3-sn-phosphoglycerides. Inhibits both skeletal (RYR1) and cardiac (RYR2) ryanodine receptors (calcium release channels). Probably blocks ryanodine receptors by generating a lipid product. In Heterometrus laoticus (Thai giant scorpion), this protein is Phospholipase A2 heteromtoxin.